A 477-amino-acid polypeptide reads, in one-letter code: Bifunctional protein HldE (477 aa).

The interval 1–319 (MTVIFPNFSK…NIMNSHICTT (319 aa)) is ribokinase. 195–198 (NISE) is a binding site for ATP. Residue D264 is part of the active site. The tract at residues 346–477 (MTNGVFDILH…NIINAIKRKN (132 aa)) is cytidylyltransferase.

The protein in the N-terminal section; belongs to the carbohydrate kinase PfkB family. In the C-terminal section; belongs to the cytidylyltransferase family. As to quaternary structure, homodimer.

It catalyses the reaction D-glycero-beta-D-manno-heptose 7-phosphate + ATP = D-glycero-beta-D-manno-heptose 1,7-bisphosphate + ADP + H(+). It carries out the reaction D-glycero-beta-D-manno-heptose 1-phosphate + ATP + H(+) = ADP-D-glycero-beta-D-manno-heptose + diphosphate. It participates in nucleotide-sugar biosynthesis; ADP-L-glycero-beta-D-manno-heptose biosynthesis; ADP-L-glycero-beta-D-manno-heptose from D-glycero-beta-D-manno-heptose 7-phosphate: step 1/4. The protein operates within nucleotide-sugar biosynthesis; ADP-L-glycero-beta-D-manno-heptose biosynthesis; ADP-L-glycero-beta-D-manno-heptose from D-glycero-beta-D-manno-heptose 7-phosphate: step 3/4. In terms of biological role, catalyzes the phosphorylation of D-glycero-D-manno-heptose 7-phosphate at the C-1 position to selectively form D-glycero-beta-D-manno-heptose-1,7-bisphosphate. Catalyzes the ADP transfer from ATP to D-glycero-beta-D-manno-heptose 1-phosphate, yielding ADP-D-glycero-beta-D-manno-heptose. In Blochmanniella pennsylvanica (strain BPEN), this protein is Bifunctional protein HldE.